The chain runs to 402 residues: Phosphoglycerate kinase (402 aa).

Substrate is bound by residues 24–26 (DFN), Arg40, 63–66 (HFGR), Arg122, and Arg155. ATP contacts are provided by residues Lys206, Gly297, Glu328, and 357–360 (GGDS).

Belongs to the phosphoglycerate kinase family. Monomer.

Its subcellular location is the cytoplasm. It carries out the reaction (2R)-3-phosphoglycerate + ATP = (2R)-3-phospho-glyceroyl phosphate + ADP. It functions in the pathway carbohydrate degradation; glycolysis; pyruvate from D-glyceraldehyde 3-phosphate: step 2/5. This chain is Phosphoglycerate kinase, found in Parasynechococcus marenigrum (strain WH8102).